A 503-amino-acid polypeptide reads, in one-letter code: ATP synthase subunit alpha (503 aa).

170–177 is a binding site for ATP; that stretch reads GDKQTGKT.

The protein belongs to the ATPase alpha/beta chains family. As to quaternary structure, F-type ATPases have 2 components, CF(1) - the catalytic core - and CF(0) - the membrane proton channel. CF(1) has five subunits: alpha(3), beta(3), gamma(1), delta(1), epsilon(1). CF(0) has three main subunits: a(1), b(2) and c(9-12). The alpha and beta chains form an alternating ring which encloses part of the gamma chain. CF(1) is attached to CF(0) by a central stalk formed by the gamma and epsilon chains, while a peripheral stalk is formed by the delta and b chains.

It localises to the cell inner membrane. It carries out the reaction ATP + H2O + 4 H(+)(in) = ADP + phosphate + 5 H(+)(out). Produces ATP from ADP in the presence of a proton gradient across the membrane. The alpha chain is a regulatory subunit. The sequence is that of ATP synthase subunit alpha from Helicobacter pylori (strain P12).